A 564-amino-acid polypeptide reads, in one-letter code: Efflux pump hmp6 (564 aa).

Over residues 1–25 the composition is skewed to basic and acidic residues; that stretch reads MEKHAEPEKSLGDKEFQEKELHEKP. Positions 1-46 are disordered; sequence MEKHAEPEKSLGDKEFQEKELHEKPAPAASEDISGDSSVNKEDGPD. 8 helical membrane-spanning segments follow: residues 58-78, 96-118, 125-145, 156-176, 186-206, 214-234, 259-279, and 289-309; these read LAVVMFALCISNFLVALDTTI, VGWYTSSYLLTNCAFQLFYGKLY, IVFTVAMIIFEIGSLLCGVAP, IAGLGSAGAFSGALIIVIHSV, GMIVGMYGLASVAAPLIGGAF, WCFYINLPCGGVAIAGLLFFF, FGTFFFLCSMICLLLALQMGG, and IIVLLVLFGLLLVAFIVVQFF. N-linked (GlcNAc...) asparagine glycosylation is found at Asn-312 and Asn-322. 4 consecutive transmembrane segments (helical) span residues 330-350, 361-383, 395-415, and 452-472; these read IYMFCVGAQFLVLVTFMPIWF, SGIRSLPILLSNTFCVVLAGALV, ASVVLTSIGAGLLTTLTVDAS, and IGTAVMVFVQLLGGTILVSAA.

This sequence belongs to the major facilitator superfamily. TCR/Tet family.

It localises to the cell membrane. Its function is as follows. Efflux pump that might be required for efficient secretion of hypothemycin or other secondary metabolies produced by the hypothemycin gene cluster. The protein is Efflux pump hmp6 of Hypomyces subiculosus (Nectria subiculosa).